A 209-amino-acid polypeptide reads, in one-letter code: Protein GrpE (209 aa).

Residues 1-18 (MKIFNKDGNKNSKEDTKA) show a composition bias toward basic and acidic residues. Residues 1 to 60 (MKIFNKDGNKNSKEDTKAGAENSEAQNSGSSAEEVNKARENPEEASASSEAEKSPEVKCQ) are disordered. Residues 23 to 33 (SEAQNSGSSAE) show a composition bias toward polar residues. The span at 50 to 60 (EAEKSPEVKCQ) shows a compositional bias: basic and acidic residues.

It belongs to the GrpE family. In terms of assembly, homodimer.

The protein localises to the cytoplasm. Participates actively in the response to hyperosmotic and heat shock by preventing the aggregation of stress-denatured proteins, in association with DnaK and GrpE. It is the nucleotide exchange factor for DnaK and may function as a thermosensor. Unfolded proteins bind initially to DnaJ; upon interaction with the DnaJ-bound protein, DnaK hydrolyzes its bound ATP, resulting in the formation of a stable complex. GrpE releases ADP from DnaK; ATP binding to DnaK triggers the release of the substrate protein, thus completing the reaction cycle. Several rounds of ATP-dependent interactions between DnaJ, DnaK and GrpE are required for fully efficient folding. The polypeptide is Protein GrpE (Methanosarcina barkeri (strain Fusaro / DSM 804)).